Here is a 258-residue protein sequence, read N- to C-terminus: MIFVLDVGNTNTVLGVYDGDELKHHWRIETSRGKTEDEYAMTIKALLNHVGLQFSDIDGIIISSVVPPIMFALERMCLKYFHIKPIIVGPGIKTGLNIKYDNPREVGADRIVNAVAGIHLYGSPLIIVDFGTATTYCYINEHKQYMGGAIAPGIMISTEALFARAAKLPRIEIARPDDIIGKNTVSAMQAGILYGYVGQVEGIVSRMKAKSSVPPKVIATGGLASLIASESSVIDIVDPFLTLTGLKILYEKNVDKKQ.

Residue 6-13 (DVGNTNTV) participates in ATP binding. Residues Tyr100 and 107-110 (GADR) each bind substrate. The Proton acceptor role is filled by Asp109. Asp129 lines the K(+) pocket. Residue Thr132 participates in ATP binding. Thr184 provides a ligand contact to substrate.

It belongs to the type III pantothenate kinase family. As to quaternary structure, homodimer. The cofactor is NH4(+). Requires K(+) as cofactor.

It localises to the cytoplasm. The enzyme catalyses (R)-pantothenate + ATP = (R)-4'-phosphopantothenate + ADP + H(+). Its pathway is cofactor biosynthesis; coenzyme A biosynthesis; CoA from (R)-pantothenate: step 1/5. Functionally, catalyzes the phosphorylation of pantothenate (Pan), the first step in CoA biosynthesis. The sequence is that of Type III pantothenate kinase from Geobacillus sp. (strain WCH70).